A 152-amino-acid chain; its full sequence is Protein-export protein SecB (152 aa).

Belongs to the SecB family. Homotetramer, a dimer of dimers. One homotetramer interacts with 1 SecA dimer.

It is found in the cytoplasm. Functionally, one of the proteins required for the normal export of preproteins out of the cell cytoplasm. It is a molecular chaperone that binds to a subset of precursor proteins, maintaining them in a translocation-competent state. It also specifically binds to its receptor SecA. This chain is Protein-export protein SecB, found in Rickettsia conorii (strain ATCC VR-613 / Malish 7).